Consider the following 383-residue polypeptide: Lipid-A-disaccharide synthase (383 aa).

It belongs to the LpxB family.

It catalyses the reaction 2-N,3-O-bis[(3R)-3-hydroxytetradecanoyl]-alpha-D-glucosaminyl 1-phosphate + UDP-2-N,3-O-bis[(3R)-3-hydroxytetradecanoyl]-alpha-D-glucosamine = lipid A disaccharide (E. coli) + UDP + H(+). It carries out the reaction a lipid X + a UDP-2-N,3-O-bis[(3R)-3-hydroxyacyl]-alpha-D-glucosamine = a lipid A disaccharide + UDP + H(+). It functions in the pathway glycolipid biosynthesis; lipid IV(A) biosynthesis; lipid IV(A) from (3R)-3-hydroxytetradecanoyl-[acyl-carrier-protein] and UDP-N-acetyl-alpha-D-glucosamine: step 5/6. Functionally, condensation of UDP-2,3-diacylglucosamine and 2,3-diacylglucosamine-1-phosphate to form lipid A disaccharide, a precursor of lipid A, a phosphorylated glycolipid that anchors the lipopolysaccharide to the outer membrane of the cell. This chain is Lipid-A-disaccharide synthase, found in Klebsiella pneumoniae (strain 342).